The chain runs to 1726 residues: Transcription elongation factor SPT6 (1726 aa).

Acidic residues-rich tracts occupy residues 1–14, 32–49, and 59–80; these read MSDFVESEAEESEE, EEEDDDEEEEEENLDDQD, and NDDDDEEEGEEDEGSDSGDSED. Positions 1–197 are disordered; that stretch reads MSDFVESEAE…DDGQPLKKPK (197 aa). An N-acetylserine modification is found at serine 2. Residues 2–485 are interaction with IWS1; that stretch reads SDFVESEAEE…PKMQNAAKAS (484 aa). An interaction with PAAF1 region spans residues 2–916; the sequence is SDFVESEAEE…PPVLRQAVSL (915 aa). Residues 3 to 51 adopt a coiled-coil conformation; it reads DFVESEAEESEEEYNHEGEVVPRVTKKFVEEEDDDEEEEEENLDDQDER. 2 positions are modified to phosphoserine: serine 7 and serine 12. Phosphoserine is present on residues serine 73, serine 78, and serine 91. Positions 95 to 105 are enriched in acidic residues; sequence RLEDDDFDLIE. The segment covering 111–122 has biased composition (basic residues); the sequence is KVKRGQKYRRVK. Serine 125 is subject to Phosphoserine. 3 stretches are compositionally biased toward acidic residues: residues 126-136, 150-160, and 169-190; these read DDDEDDEEEYG, FQDEEGEEGQE, and PDEEEEDDEESDIDDFIVDDDG. Serine 267 is subject to Phosphoserine. The interaction with KDM6A stretch occupies residues 317-1300; that stretch reads ADWIYRNAFA…NEWKLPKDTY (984 aa). Residues 489 to 520 form a disordered region; the sequence is LKRIKEDGDEEGEGEEAEDEEQRGPELKQASR. The span at 495–509 shows a compositional bias: acidic residues; sequence DGDEEGEGEEAEDEE. Residues 510–520 are compositionally biased toward basic and acidic residues; that stretch reads QRGPELKQASR. The residue at position 743 (lysine 743) is an N6-acetyllysine. One can recognise an S1 motif domain in the interval 1213–1282; sequence WNHFDSGSCP…EKFSADLTCR (70 aa). The SH2 domain maps to 1325–1431; sequence YIKRVIAHPS…FARDLLNHKY (107 aa). Tyrosine 1515 bears the Phosphotyrosine mark. Threonine 1523 carries the post-translational modification Phosphothreonine. Serine 1526 bears the Phosphoserine mark. Threonine 1530 and threonine 1532 each carry phosphothreonine. The residue at position 1535 (serine 1535) is a Phosphoserine. The residue at position 1539 (threonine 1539) is a Phosphothreonine. The interval 1633 to 1726 is interaction with histone H2B and H3; the sequence is PQYHQLQAST…ATPLLDEMDR (94 aa). Positions 1636 to 1726 are disordered; the sequence is HQLQASTTPQ…ATPLLDEMDR (91 aa). Low complexity predominate over residues 1639–1664; that stretch reads QASTTPQSTQAQPQPSSSSRQRQQQP. Lysine 1676 carries the N6-acetyllysine modification. Residue threonine 1697 is modified to Phosphothreonine. 2 positions are modified to phosphoserine: serine 1701 and serine 1703. Threonine 1709 and threonine 1718 each carry phosphothreonine.

This sequence belongs to the SPT6 family. In terms of assembly, interacts with RNA polymerase II and the DRB sensitivity-inducing factor complex (DSIF complex), which is composed of SUPT5H and SUPT4H1 or SUPT4H2. Interacts with PAAF1. Interacts with histone H2B and H3. Interacts (via SH2 domain) with POLR2A phosphorylated at 'Ser-2'. Interacts (via SH2 domain) with SETD1A. Interacts with IWS1, KDM6A and AICDA. Interacts with WDR43. Dephosphorylated at Ser-1530 by the PNUTS-PP1 complex during RNA polymerase II transcription pause-release. Ubiquitously expressed.

It localises to the nucleus. Functionally, histone H3-H4 chaperone that plays a key role in the regulation of transcription elongation and mRNA processing. Enhances the transcription elongation by RNA polymerase II (RNAPII) and is also required for the efficient activation of transcriptional elongation by the HIV-1 nuclear transcriptional activator, Tat. Besides chaperoning histones in transcription, acts to transport and splice mRNA by forming a complex with IWS1 and the C-terminal domain (CTD) of the RNAPII subunit RPB1 (POLR2A). The SUPT6H:IWS1:CTD complex recruits mRNA export factors (ALYREF/THOC4, EXOSC10) as well as histone modifying enzymes (such as SETD2), to ensure proper mRNA splicing, efficient mRNA export and elongation-coupled H3K36 methylation, a signature chromatin mark of active transcription. SUPT6H via its association with SETD1A, regulates both class-switch recombination and somatic hypermutation through formation of H3K4me3 epigenetic marks on activation-induced cytidine deaminase (AICDA) target loci. Promotes the activation of the myogenic gene program by entailing erasure of the repressive H3K27me3 epigenetic mark through stabilization of the chromatin interaction of the H3K27 demethylase KDM6A. This is Transcription elongation factor SPT6 (Supt6h) from Mus musculus (Mouse).